The primary structure comprises 132 residues: MALTLDIVTPERRVLSVTVDEVRAPGAAGGFGIRVNHEPFMTALEPGRLTYVEGGREHHYAIGGGFLQVAENRVIVLADTAEAAGDIDVERAKRAFQDAQDRLLRMTEQDEHHPAESARVKRAAARISVAGR.

This sequence belongs to the ATPase epsilon chain family. In terms of assembly, F-type ATPases have 2 components, CF(1) - the catalytic core - and CF(0) - the membrane proton channel. CF(1) has five subunits: alpha(3), beta(3), gamma(1), delta(1), epsilon(1). CF(0) has three main subunits: a, b and c.

Its subcellular location is the cell inner membrane. Produces ATP from ADP in the presence of a proton gradient across the membrane. This is ATP synthase epsilon chain from Anaeromyxobacter sp. (strain Fw109-5).